The primary structure comprises 286 residues: Cytochrome bo(3) ubiquinol oxidase subunit 2 (286 aa).

Residues 1-24 form the signal peptide; it reads MQFIKYKSYILKFLLVSCIFCING. The N-palmitoyl cysteine moiety is linked to residue Cys25. The S-diacylglycerol cysteine moiety is linked to residue Cys25. Topologically, residues 25 to 44 are extracellular; that stretch reads CDCTILCPNGLIAQEQRFVL. Residues 45 to 67 form a helical membrane-spanning segment; sequence FVSFFTMLLIIIPVIFMTIFFVL. At 68–85 the chain is on the cytoplasmic side; that stretch reads RYRESNFSKTYDPKWSHS. A helical transmembrane segment spans residues 86-108; that stretch reads NIIELLIWGIPIIIIVFLSIFSW. Residues 109 to 286 lie on the Extracellular side of the membrane; the sequence is KSVHDLDPKK…VIANVLKISL (178 aa).

This sequence belongs to the cytochrome c oxidase subunit 2 family. As to quaternary structure, heterooctamer of two A chains, two B chains, two C chains and two D chains.

It is found in the cell membrane. In terms of biological role, cytochrome bo(3) ubiquinol terminal oxidase is the component of the aerobic respiratory chain of E.coli that predominates when cells are grown at high aeration. Has proton pump activity across the membrane in addition to electron transfer, pumping 2 protons/electron. The polypeptide is Cytochrome bo(3) ubiquinol oxidase subunit 2 (cyoA) (Buchnera aphidicola subsp. Baizongia pistaciae (strain Bp)).